Consider the following 302-residue polypeptide: L-aminoadipate-semialdehyde dehydrogenase-phosphopantetheinyl transferase (302 aa).

CoA contacts are provided by residues arginine 44, 83-88, and 105-108; these read RTGKGK and NVSH. Mg(2+) contacts are provided by aspartate 126 and glutamate 178. Position 178–182 (178–182) interacts with CoA; it reads ESFIK.

Belongs to the P-Pant transferase superfamily. AcpS family. As to quaternary structure, monomer. The cofactor is Mg(2+).

The protein localises to the cytoplasm. The protein resides in the cytosol. The catalysed reaction is apo-[ACP] + CoA = holo-[ACP] + adenosine 3',5'-bisphosphate + H(+). The enzyme catalyses apo-[ACP] + acetyl-CoA = acetyl-[ACP] + adenosine 3',5'-bisphosphate + H(+). Catalyzes the post-translational modification of target proteins by phosphopantetheine. Can transfer the 4'-phosphopantetheine moiety from coenzyme A, regardless of whether the CoA is presented in the free thiol form or as an acetyl thioester, to a serine residue of a broad range of acceptors. This chain is L-aminoadipate-semialdehyde dehydrogenase-phosphopantetheinyl transferase (aasdhppt), found in Xenopus laevis (African clawed frog).